The chain runs to 359 residues: Biotin synthase (359 aa).

The tract at residues 1-23 is disordered; that stretch reads MSVADSSAADSVAAPDTADTSSS. In terms of domain architecture, Radical SAM core spans 76 to 302; the sequence is YFGNTVQLYF…VNPDRELRIA (227 aa). Residues cysteine 94, cysteine 98, and cysteine 101 each coordinate [4Fe-4S] cluster. The [2Fe-2S] cluster site is built by cysteine 138, cysteine 170, cysteine 230, and arginine 300.

It belongs to the radical SAM superfamily. Biotin synthase family. In terms of assembly, homodimer. [4Fe-4S] cluster is required as a cofactor. Requires [2Fe-2S] cluster as cofactor.

It carries out the reaction (4R,5S)-dethiobiotin + (sulfur carrier)-SH + 2 reduced [2Fe-2S]-[ferredoxin] + 2 S-adenosyl-L-methionine = (sulfur carrier)-H + biotin + 2 5'-deoxyadenosine + 2 L-methionine + 2 oxidized [2Fe-2S]-[ferredoxin]. The protein operates within cofactor biosynthesis; biotin biosynthesis; biotin from 7,8-diaminononanoate: step 2/2. In terms of biological role, catalyzes the conversion of dethiobiotin (DTB) to biotin by the insertion of a sulfur atom into dethiobiotin via a radical-based mechanism. This Rhodopirellula baltica (strain DSM 10527 / NCIMB 13988 / SH1) protein is Biotin synthase.